Consider the following 197-residue polypeptide: MAKVLVLKSSILGDYSQSSALIGHLMSHWQQQGAQMTVRDLAADPVPVLDGEIATGMRGGDNLSPRQQQVLDLSDELIAELKSHDTLVIAAPMYNFSIPTQLKNWIDLIARAGVTFTYTETGPKGLLEGKRAVVVTTRGGMHKEGASDHIVPYLKTVLGFIGITEVEFVYAEALNMGPDATAQGLLEAKTALDSLTA.

Residues Ser10, 16–18, 93–96, and 137–140 contribute to the FMN site; these read SQS, MYNF, and TRGG.

Belongs to the azoreductase type 1 family. As to quaternary structure, homodimer. FMN serves as cofactor.

The catalysed reaction is 2 a quinone + NADH + H(+) = 2 a 1,4-benzosemiquinone + NAD(+). It catalyses the reaction N,N-dimethyl-1,4-phenylenediamine + anthranilate + 2 NAD(+) = 2-(4-dimethylaminophenyl)diazenylbenzoate + 2 NADH + 2 H(+). Quinone reductase that provides resistance to thiol-specific stress caused by electrophilic quinones. In terms of biological role, also exhibits azoreductase activity. Catalyzes the reductive cleavage of the azo bond in aromatic azo compounds to the corresponding amines. The chain is FMN-dependent NADH:quinone oxidoreductase from Shewanella denitrificans (strain OS217 / ATCC BAA-1090 / DSM 15013).